The following is a 352-amino-acid chain: 7,8-didemethyl-8-hydroxy-5-deazariboflavin synthase (352 aa).

Residues 35–275 enclose the Radical SAM core domain; it reads ITFSKNAFIP…EGISIQVPPN (241 aa). 3 residues coordinate [4Fe-4S] cluster: C49, C53, and C56.

Belongs to the radical SAM superfamily. CofG family. Consists of two subunits, CofG and CofH. Requires [4Fe-4S] cluster as cofactor.

It catalyses the reaction 5-amino-5-(4-hydroxybenzyl)-6-(D-ribitylimino)-5,6-dihydrouracil + S-adenosyl-L-methionine = 7,8-didemethyl-8-hydroxy-5-deazariboflavin + 5'-deoxyadenosine + L-methionine + NH4(+) + H(+). Its pathway is cofactor biosynthesis; coenzyme F0 biosynthesis. In terms of biological role, catalyzes the radical-mediated synthesis of 7,8-didemethyl-8-hydroxy-5-deazariboflavin from 5-amino-5-(4-hydroxybenzyl)-6-(D-ribitylimino)-5,6-dihydrouracil. This Methanococcus maripaludis (strain C5 / ATCC BAA-1333) protein is 7,8-didemethyl-8-hydroxy-5-deazariboflavin synthase.